The sequence spans 165 residues: Neuritin-like protein (165 aa).

The N-terminal stretch at 1-35 is a signal peptide; that stretch reads MMRCCRRRCCCRQPPHALRPLLLLPLVLLPPLAAA. The GPI-anchor amidated alanine moiety is linked to residue Ala139. A propeptide spans 140-165 (removed in mature form); that stretch reads PALPMAPAPPLLAAALALAYLLRPLA.

This sequence belongs to the neuritin family.

Its subcellular location is the cell membrane. The protein is Neuritin-like protein (NRN1L) of Homo sapiens (Human).